The following is a 364-amino-acid chain: Mannonate dehydratase (364 aa).

This sequence belongs to the mannonate dehydratase family. Fe(2+) serves as cofactor. It depends on Mn(2+) as a cofactor.

It carries out the reaction D-mannonate = 2-dehydro-3-deoxy-D-gluconate + H2O. It participates in carbohydrate metabolism; pentose and glucuronate interconversion. In terms of biological role, catalyzes the dehydration of D-mannonate. This Streptococcus equi subsp. zooepidemicus (strain MGCS10565) protein is Mannonate dehydratase.